A 37-amino-acid polypeptide reads, in one-letter code: Delta-amaurobitoxin-Pl1b (37 aa).

Disulfide bonds link cysteine 2-cysteine 18, cysteine 9-cysteine 23, cysteine 17-cysteine 33, and cysteine 25-cysteine 31. At serine 37 the chain carries Serine amide.

This sequence belongs to the neurotoxin 07 (Beta/delta-agtx) family. 02 (aga-3) subfamily. In terms of tissue distribution, expressed by the venom gland.

It localises to the secreted. Functionally, insecticidal toxin. Binds to site 4 of insect voltage-gated sodium channel (Nav) and inhibits channel inactivation. In vivo, it lethal to lepidopteran larvae. Has no adverse affects when intracerebroventricularly injected in mice at a dose of 0.2 ug, but causes reversible paralysis of legs when injected intracerebroventricularly in mice at a dose of 2.0 ug. This Pireneitega luctuosa (Tangled nest spider) protein is Delta-amaurobitoxin-Pl1b.